The following is a 215-amino-acid chain: Probable GTP-binding protein EngB (215 aa).

Residues 30-204 (EGLEVAFAGR…QMVLAQWLGL (175 aa)) enclose the EngB-type G domain. Residues 38–45 (GRSNAGKS), 64–68 (GRTQL), 82–85 (DLPG), 149–152 (TKAD), and 182–185 (LFSA) each bind GTP. Mg(2+) is bound by residues serine 45 and threonine 66.

Belongs to the TRAFAC class TrmE-Era-EngA-EngB-Septin-like GTPase superfamily. EngB GTPase family. It depends on Mg(2+) as a cofactor.

Functionally, necessary for normal cell division and for the maintenance of normal septation. The protein is Probable GTP-binding protein EngB of Pseudomonas aeruginosa (strain ATCC 15692 / DSM 22644 / CIP 104116 / JCM 14847 / LMG 12228 / 1C / PRS 101 / PAO1).